Reading from the N-terminus, the 239-residue chain is Ubiquinone biosynthesis O-methyltransferase (239 aa).

4 residues coordinate S-adenosyl-L-methionine: R42, G62, D83, and M127.

It belongs to the methyltransferase superfamily. UbiG/COQ3 family.

The catalysed reaction is a 3-demethylubiquinol + S-adenosyl-L-methionine = a ubiquinol + S-adenosyl-L-homocysteine + H(+). It catalyses the reaction a 3-(all-trans-polyprenyl)benzene-1,2-diol + S-adenosyl-L-methionine = a 2-methoxy-6-(all-trans-polyprenyl)phenol + S-adenosyl-L-homocysteine + H(+). It participates in cofactor biosynthesis; ubiquinone biosynthesis. Its function is as follows. O-methyltransferase that catalyzes the 2 O-methylation steps in the ubiquinone biosynthetic pathway. The sequence is that of Ubiquinone biosynthesis O-methyltransferase from Pectobacterium carotovorum subsp. carotovorum (strain PC1).